Reading from the N-terminus, the 452-residue chain is Envelope glycoprotein D (452 aa).

The signal sequence occupies residues 1-19; that stretch reads MPAVLLVLYVNPPPSVCIL. Residues 20–405 lie on the Virion surface side of the membrane; the sequence is TQKLSLGLYN…NSTFVGISVG (386 aa). 2 N-linked (GlcNAc...) asparagine; by host glycosylation sites follow: Asn103 and Asn111. 3 cysteine pairs are disulfide-bonded: Cys138/Cys259, Cys176/Cys273, and Cys188/Cys197. The segment at 331–365 is disordered; sequence PDNHPGFDSVESEITQNKTDPKPGQADPKPNQPFK. Residues Asn347 and Asn396 are each glycosylated (N-linked (GlcNAc...) asparagine; by host). The helical transmembrane segment at 406-422 threads the bilayer; the sequence is LGIAGLVLVGVILYVCL. The Intravirion segment spans residues 423–452; that stretch reads RRKKELKKSAQNGLTRLRSTFKDVKYTQLP.

The protein belongs to the herpesviridae glycoprotein D family.

Its subcellular location is the virion membrane. Functionally, envelope glycoprotein that binds to host cell entry receptors, promoting the virus entry into host cells. May trigger fusion with host membrane, by recruiting the fusion machinery composed of gB and gH/gL. The polypeptide is Envelope glycoprotein D (gD) (Equine herpesvirus 1 (strain Ab4p) (EHV-1)).